Consider the following 187-residue polypeptide: CASP-like protein 2 (187 aa).

The Cytoplasmic portion of the chain corresponds to 1 to 24; that stretch reads MKVSAVETGEISQVSAPRKGMIRG. A helical transmembrane segment spans residues 25 to 45; that stretch reads LSIMDFILRIVAAIGTLGSAL. The Extracellular segment spans residues 46-72; it reads STGTTRETLPFTTQFVKFRAVFDDLPT. Residues 73–93 form a helical membrane-spanning segment; the sequence is FVFFVTSNSIVCGYLVLSLAL. Topologically, residues 94–108 are cytoplasmic; the sequence is SFFHIIRRSSAAKSR. Residues 109–129 form a helical membrane-spanning segment; that stretch reads ILLVFLDTVMFGLLTTGAAAA. Residues 130-163 are Extracellular-facing; the sequence is GTIVYVSHYGNVNANWFPFCGQYNHFCERISGSL. Residues 164–184 traverse the membrane as a helical segment; sequence IGSFIAVVIFMIIILMSAVSI. Residues 185-187 are Cytoplasmic-facing; it reads SKH.

This sequence belongs to the Casparian strip membrane proteins (CASP) family. In terms of assembly, homodimer and heterodimers.

The protein localises to the cell membrane. The sequence is that of CASP-like protein 2 from Lotus japonicus (Lotus corniculatus var. japonicus).